The sequence spans 270 residues: Phosphatidylinositol transfer protein alpha isoform (270 aa).

Threonine 58, lysine 60, glutamate 85, asparagine 89, threonine 96, and lysine 194 together coordinate a 1,2-diacyl-sn-glycero-3-phospho-(1D-myo-inositol). At lysine 215 the chain carries N6-acetyllysine. Over residues 250–263 (TKRQLDEMRQKDPV) the composition is skewed to basic and acidic residues. Residues 250–270 (TKRQLDEMRQKDPVKGMTADD) are disordered.

Belongs to the PtdIns transfer protein family. PI transfer class I subfamily. Post-translationally, phosphorylated by PKC in a calcium and phosphatidylserine-dependent manner.

It localises to the cytoplasm. The protein resides in the nucleus. The catalysed reaction is a 1,2-diacyl-sn-glycero-3-phosphocholine(in) = a 1,2-diacyl-sn-glycero-3-phosphocholine(out). It catalyses the reaction a 1,2-diacyl-sn-glycero-3-phospho-(1D-myo-inositol)(in) = a 1,2-diacyl-sn-glycero-3-phospho-(1D-myo-inositol)(out). Its function is as follows. Catalyzes the transfer of phosphatidylinositol (PI) and phosphatidylcholine (PC) between membranes. Shows a preference for PI and PC containing shorter saturated or monosaturated acyl chains at the sn-1 and sn-2 positions. Preference order for PC is C16:1 &gt; C16:0 &gt; C18:1 &gt; C18:0 &gt; C20:4 and for PI is C16:1 &gt; C16:0 &gt; C18:1 &gt; C18:0 &gt; C20:4 &gt; C20:3. The chain is Phosphatidylinositol transfer protein alpha isoform (PITPNA) from Oryctolagus cuniculus (Rabbit).